The following is a 357-amino-acid chain: Acyl-coenzyme A diphosphatase NUDT19 (357 aa).

A Nudix hydrolase domain is found at 10–242; the sequence is AATVMLAAGW…IWLAPPQFYE (233 aa). The disordered stretch occupies residues 72–93; it reads PRFGLGPEPPRQPPFPGLSHGD. The segment covering 78-87 has biased composition (pro residues); sequence PEPPRQPPFP. The short motif at 97–118 is the Nudix box element; sequence AALPDDVALRICAIREAFEEAG. 2 residues coordinate Mg(2+): Glu112 and Glu116. Lys300 carries the post-translational modification N6-succinyllysine. The Microbody targeting signal motif lies at 355 to 357; that stretch reads AHL.

The protein belongs to the Nudix hydrolase family. Monomer. It depends on Mg(2+) as a cofactor. Mn(2+) is required as a cofactor. As to expression, highly expressed in the kidneys, with lower levels in skeletal muscle and brain (at protein level).

It is found in the peroxisome. It carries out the reaction an acyl-CoA + H2O = an acyl-4'-phosphopantetheine + adenosine 3',5'-bisphosphate + 2 H(+). The catalysed reaction is CoA + H2O = (R)-4'-phosphopantetheine + adenosine 3',5'-bisphosphate + 2 H(+). The enzyme catalyses hexanoyl-CoA + H2O = hexanoyl-4'-phosphopantetheine + adenosine 3',5'-bisphosphate + 2 H(+). It catalyses the reaction octanoyl-CoA + H2O = S-octanoyl-4'-phosphopantetheine + adenosine 3',5'-bisphosphate + 2 H(+). It carries out the reaction butanoyl-CoA + H2O = S-butanoyl-4'-phosphopantetheine + adenosine 3',5'-bisphosphate + 2 H(+). The catalysed reaction is propanoyl-CoA + H2O = propanoyl-4'-phosphopantetheine + adenosine 3',5'-bisphosphate + 2 H(+). The enzyme catalyses malonyl-CoA + H2O = malonyl-4'-phosphopantetheine + adenosine 3',5'-bisphosphate + 2 H(+). It catalyses the reaction succinyl-CoA + H2O = succinyl-4'-phosphopantetheine + adenosine 3',5'-bisphosphate + 2 H(+). It carries out the reaction choloyl-CoA + H2O = S-choloyl-4'-phosphopantetheine + adenosine 3',5'-bisphosphate + 2 H(+). The catalysed reaction is 4,8-dimethylnonanoyl-CoA + H2O = S-(4,8-dimethylnonanoyl)-4'-phosphopantetheine + adenosine 3',5'-bisphosphate + 2 H(+). The enzyme catalyses (9Z,12Z,15Z)-octadecatrienoyl-CoA + H2O = S-(9Z,12Z,15Z-octadecatrienoyl)-4'-phosphopantetheine + adenosine 3',5'-bisphosphate + 2 H(+). It catalyses the reaction (9Z,12Z)-octadecadienoyl-CoA + H2O = S-(9Z,12Z-octadecadienoyl)-4'-phosphopantetheine + adenosine 3',5'-bisphosphate + 2 H(+). It carries out the reaction (9Z)-hexadecenoyl-CoA + H2O = S-(9Z-hexadecenoyl)-4'-phosphopantetheine + adenosine 3',5'-bisphosphate + 2 H(+). The catalysed reaction is (9Z)-tetradecenoyl-CoA + H2O = S-(9Z-tetradecenoyl)-4'-phosphopantetheine + adenosine 3',5'-bisphosphate + 2 H(+). The enzyme catalyses (6Z)-octenoyl-CoA + H2O = S-(6Z-octenoyl)-4'-phosphopantetheine + adenosine 3',5'-bisphosphate + 2 H(+). It catalyses the reaction hexadecanoyl-CoA + H2O = S-hexadecanoyl-4'-phosphopantetheine + adenosine 3',5'-bisphosphate + 2 H(+). It carries out the reaction tetradecanoyl-CoA + H2O = tetradecanoyl-4'-phosphopantetheine + adenosine 3',5'-bisphosphate + 2 H(+). The catalysed reaction is dodecanoyl-CoA + H2O = S-dodecanoyl-4'-phosphopantetheine + adenosine 3',5'-bisphosphate + 2 H(+). The enzyme catalyses a 5'-end CoA-ribonucleoside in mRNA + H2O = a 5'-end phospho-adenosine-phospho-ribonucleoside in mRNA + (R)-4'-phosphopantetheine + 2 H(+). Inhibited by chenodeoxycholic acid (CDCA) and its conjugated derivatives, taurochenodeoxycholic acid and glycochenodeoxycholic acid. Inhibited by fluoride. Fatty acyl-coenzyme A (CoA) diphosphatase that hydrolyzes fatty acyl-CoA to yield acyl-4'-phosphopantetheine and adenosine 3',5'-bisphosphate. Mediates the hydrolysis of a wide range of CoA esters, including choloyl-CoA and branched-chain fatty-acyl-CoA esters and at low substrate concentrations medium and long-chain fatty-acyl-CoA esters are the primary substrates. Highest activity seen with medium-chain acyl-CoA esters and higher rates of activity seen with the unsaturated acyl-CoA esters compared with the saturated esters. Exhibits decapping activity towards dpCoA-capped RNAs in vitro. The sequence is that of Acyl-coenzyme A diphosphatase NUDT19 (Nudt19) from Mus musculus (Mouse).